A 391-amino-acid polypeptide reads, in one-letter code: MKFVDEARILVVAGDGGNGCVSFRREKYIPKGGPDGGDGGDGGDVYLLADENLNTLIDYRFEKSFRAERGQNGQSRDCTGRRGQDTTIKVPVGTRVRDAVTGEVLGDMIRHEQRLMVAKGGFHGLGNTRFKSSVNRAPRQRTMGTSGETRELMLELMLLADVGMLGMPNAGKSTFIRAVSAAKPKVADYPFTTLVPSLGVVRMDNEQSFVVADIPGLIKGASDGAGLGIRFLKHLERCRVLLHLIDICPVDGSDPVENARIIVNELQQYSEKLAEKPRRLVFNKVDLLEPEEARQRAQAIADELGWEGDFYMISAINRQGVKALCWDIMEFMKTQPRNMSRTEGETQPEKVEFMWDDYHKKQLEQVSEVDDDWDDDWDEDDDEGIEVIYKR.

The Obg domain occupies 1-159 (MKFVDEARIL…RELMLELMLL (159 aa)). One can recognise an OBG-type G domain in the interval 160-333 (ADVGMLGMPN…LCWDIMEFMK (174 aa)). GTP is bound by residues 166-173 (GMPNAGKS), 191-195 (FTTLV), 213-216 (DIPG), 283-286 (NKVD), and 314-316 (SAI). The Mg(2+) site is built by Ser173 and Thr193.

This sequence belongs to the TRAFAC class OBG-HflX-like GTPase superfamily. OBG GTPase family. Monomer. Mg(2+) serves as cofactor.

Its subcellular location is the cytoplasm. In terms of biological role, an essential GTPase which binds GTP, GDP and possibly (p)ppGpp with moderate affinity, with high nucleotide exchange rates and a fairly low GTP hydrolysis rate. Plays a role in control of the cell cycle, stress response, ribosome biogenesis and in those bacteria that undergo differentiation, in morphogenesis control. This Photorhabdus laumondii subsp. laumondii (strain DSM 15139 / CIP 105565 / TT01) (Photorhabdus luminescens subsp. laumondii) protein is GTPase Obg.